The primary structure comprises 295 residues: Forkhead box protein N5 (295 aa).

The disordered stretch occupies residues S119 to N146. Positions R178–L275 form a DNA-binding region, fork-head.

As to expression, ubiquitously expressed in early cleavage stage and gastrula stage embryos.

It localises to the nucleus. The polypeptide is Forkhead box protein N5 (Xenopus laevis (African clawed frog)).